The following is a 221-amino-acid chain: MELARYIDHTALKAETTKDQITTLCAEALEYKFASVCVNPTWVKYAAEQLKSDDDVKVCTVIGFPLGANTPEVKAFETKDAIANGADEVDMVINIAALKDADYDLVERDIRAVVEAANGTLVKVIFETCMLTKEEIKKAAELSVKAGADFVKTSTGFSTGGATVEDIRLMRETVGPDIGVKASGGVRDFEGAKAMIDAGATRIGASAGIAIVTGGRSDSDY.

Residue Asp-90 is the Proton donor/acceptor of the active site. Lys-152 acts as the Schiff-base intermediate with acetaldehyde in catalysis. The active-site Proton donor/acceptor is the Lys-181.

Belongs to the DeoC/FbaB aldolase family. DeoC type 1 subfamily.

The protein resides in the cytoplasm. The catalysed reaction is 2-deoxy-D-ribose 5-phosphate = D-glyceraldehyde 3-phosphate + acetaldehyde. It participates in carbohydrate degradation; 2-deoxy-D-ribose 1-phosphate degradation; D-glyceraldehyde 3-phosphate and acetaldehyde from 2-deoxy-alpha-D-ribose 1-phosphate: step 2/2. Its function is as follows. Catalyzes a reversible aldol reaction between acetaldehyde and D-glyceraldehyde 3-phosphate to generate 2-deoxy-D-ribose 5-phosphate. The sequence is that of Deoxyribose-phosphate aldolase from Exiguobacterium sp. (strain ATCC BAA-1283 / AT1b).